The chain runs to 229 residues: 2,3-bisphosphoglycerate-dependent phosphoglycerate mutase (229 aa).

Residues 8–15, 21–22, Arg60, 87–90, Lys98, 114–115, and 183–184 contribute to the substrate site; these read RHGKSEWN, TG, ERHY, RR, and GN. Residue His9 is the Tele-phosphohistidine intermediate of the active site. Glu87 functions as the Proton donor/acceptor in the catalytic mechanism.

The protein belongs to the phosphoglycerate mutase family. BPG-dependent PGAM subfamily. In terms of assembly, homodimer.

The enzyme catalyses (2R)-2-phosphoglycerate = (2R)-3-phosphoglycerate. It functions in the pathway carbohydrate degradation; glycolysis; pyruvate from D-glyceraldehyde 3-phosphate: step 3/5. Functionally, catalyzes the interconversion of 2-phosphoglycerate and 3-phosphoglycerate. This chain is 2,3-bisphosphoglycerate-dependent phosphoglycerate mutase, found in Nautilia profundicola (strain ATCC BAA-1463 / DSM 18972 / AmH).